Consider the following 81-residue polypeptide: MESPKKKNQQLKVGILHLGSRQKKIRIQLRSQCATWKVICKSCISQTPGINLDLGSGVKVKIIPKEEHCKMPEAGEEQPQV.

Lys-12 is covalently cross-linked (Glycyl lysine isopeptide (Lys-Gly) (interchain with G-Cter in SUMO2)). Ser-20 is modified (phosphoserine). Residues Lys-61 and Lys-65 each participate in a glycyl lysine isopeptide (Lys-Gly) (interchain with G-Cter in SUMO2) cross-link.

The protein belongs to the GAGE family. In normal tissues, highly expressed in testis. Expressed also in many different types of cancers: highly expressed in breast cancer, prostate cancer and many types of lung cancers, including squamous cell carcinoma, small cell carcinoma, non-small cell carcinoma, and adenocarcinoma, as well as in Ewing's cell lines, in some Ewing's sarcoma patient samples, and in one of one alveolar rhabdomyosarcoma patient sample.

The polypeptide is X antigen family member 1 (Homo sapiens (Human)).